The primary structure comprises 426 residues: MRRCMPLVAASVAALMLAGCGGGDGDPSLSTASVSATDTTTLKPAATSTTSSVWLTLAKDSAAFTVSGTRTVRYGAGSAWVEKSVSGSGRCTSTFFGKDPAAGVAKVCQLLQGTGTLLWRGVSLAGAEFGEGSLPGTYGSNYIYPSADSVTYYKNKGMNLVRLPFRWERLQPTLNQVFDANELSRLTGFVNAVTATGQTVLLDPHNYARYYGNVIGSSAVPNSAYADFWRRLATQFKSNPRVILGLMNEPNSMPTEQWLSGANAELAAIRSANASNVVFVPGNAWTGAHSWNQNWYGTPNGTVMKGINDPGHNLVFEVHQYLDGDSSGQSANCVSATIGAQRLQDFTTWLRSNGYRGFLGEFGAASNDTCNQAVSNMLTFVKNNADVWTGWAWWAGGPWWGGYMYSIEPSNGVDKPQMSVLAPYLK.

Residues 1–19 (MRRCMPLVAASVAALMLAG) form the signal peptide. The N-palmitoyl cysteine moiety is linked to residue Cys-20. Cys-20 is lipidated: S-diacylglycerol cysteine. The propeptide occupies 20 to 45 (CGGGDGDPSLSTASVSATDTTTLKPA). Glu-249 functions as the Proton donor in the catalytic mechanism. The active-site Nucleophile is the Glu-361.

This sequence belongs to the glycosyl hydrolase 5 (cellulase A) family.

The protein localises to the cell membrane. The enzyme catalyses Endohydrolysis of (1-&gt;4)-beta-D-glucosidic linkages in cellulose, lichenin and cereal beta-D-glucans.. The polypeptide is Endoglucanase (egl) (Ralstonia solanacearum (Pseudomonas solanacearum)).